We begin with the raw amino-acid sequence, 360 residues long: Histidinol-phosphate aminotransferase (360 aa).

Residue lysine 218 is modified to N6-(pyridoxal phosphate)lysine.

This sequence belongs to the class-II pyridoxal-phosphate-dependent aminotransferase family. Histidinol-phosphate aminotransferase subfamily. As to quaternary structure, homodimer. Requires pyridoxal 5'-phosphate as cofactor.

It catalyses the reaction L-histidinol phosphate + 2-oxoglutarate = 3-(imidazol-4-yl)-2-oxopropyl phosphate + L-glutamate. It functions in the pathway amino-acid biosynthesis; L-histidine biosynthesis; L-histidine from 5-phospho-alpha-D-ribose 1-diphosphate: step 7/9. The chain is Histidinol-phosphate aminotransferase from Chlorobium phaeovibrioides (strain DSM 265 / 1930) (Prosthecochloris vibrioformis (strain DSM 265)).